Reading from the N-terminus, the 107-residue chain is Integration host factor subunit alpha (107 aa).

It belongs to the bacterial histone-like protein family. In terms of assembly, heterodimer of an alpha and a beta chain.

This protein is one of the two subunits of integration host factor, a specific DNA-binding protein that functions in genetic recombination as well as in transcriptional and translational control. This Mesorhizobium japonicum (strain LMG 29417 / CECT 9101 / MAFF 303099) (Mesorhizobium loti (strain MAFF 303099)) protein is Integration host factor subunit alpha.